The sequence spans 374 residues: tRNA-specific 2-thiouridylase MnmA (374 aa).

ATP-binding positions include 17–24 (GMSGGVDS) and methionine 43. Positions 103-105 (NPD) are interaction with target base in tRNA. Cysteine 108 acts as the Nucleophile in catalysis. A disulfide bond links cysteine 108 and cysteine 204. Position 132 (glycine 132) interacts with ATP. The interval 154-156 (KDQ) is interaction with tRNA. Catalysis depends on cysteine 204, which acts as the Cysteine persulfide intermediate. The tract at residues 316–317 (RY) is interaction with tRNA.

This sequence belongs to the MnmA/TRMU family.

It localises to the cytoplasm. The catalysed reaction is S-sulfanyl-L-cysteinyl-[protein] + uridine(34) in tRNA + AH2 + ATP = 2-thiouridine(34) in tRNA + L-cysteinyl-[protein] + A + AMP + diphosphate + H(+). Catalyzes the 2-thiolation of uridine at the wobble position (U34) of tRNA, leading to the formation of s(2)U34. The protein is tRNA-specific 2-thiouridylase MnmA of Pseudomonas fluorescens (strain SBW25).